The sequence spans 460 residues: Cysteine proteinase 7 (460 aa).

The N-terminal stretch at 1 to 17 (MKVLSALCVLLVSVATA) is a signal peptide. Residues 18–111 (KQQLSEVEYR…TESDKIFDAS (94 aa)) constitute a propeptide, activation peptide. 2 disulfide bridges follow: cysteine 131/cysteine 176 and cysteine 167/cysteine 210. Cysteine 134 is an active-site residue. N-linked (GlcNAc...) asparagine glycans are attached at residues asparagine 226 and asparagine 252. The cysteines at positions 268 and 445 are disulfide-linked. Residue histidine 275 is part of the active site. Residues 285–409 (GSGSSGSHGG…GSSSGSNSNG (125 aa)) are disordered. Residues 294–359 (GSQSQSAGSD…QSGSQSGNSG (66 aa)) show a composition bias toward low complexity. Residues 367–385 (AGSGSGSGSGSGSGSGSGS) are compositionally biased toward gly residues. Low complexity predominate over residues 386–409 (VSGSASGSASGSASGSSSGSNSNG). Asparagine 423 is a catalytic residue.

It belongs to the peptidase C1 family. Glycosylated; contains GlcNAc-alpha-1-P-Ser residues. Also N-glycosylated.

Its subcellular location is the lysosome. This Dictyostelium discoideum (Social amoeba) protein is Cysteine proteinase 7 (cprG).